A 41-amino-acid chain; its full sequence is Pi-stichotoxin-Hmg5c (41 aa).

3 cysteine pairs are disulfide-bonded: Cys-4-Cys-37, Cys-6-Cys-30, and Cys-20-Cys-38.

The protein belongs to the sea anemone type 3 (BDS) potassium channel toxin family.

It localises to the secreted. The protein resides in the nematocyst. Functionally, toxin with different activities on acid-sensing ion channels (ASIC) and nicotinic acetylcholine receptors. Is able to bind T.californica muscle-type nicotinic acetylcholine receptors (nAChR) (alpha-1-beta-1-delta-epsilon (CHRNA1-CHRNB1-CHRND-CHRNE)), and human alpha-7/CHRNA7 nicotinic acetylcholine receptors. Weakly and reversibly inhibits rat homomeric ASIC1 (isoform ASIC1a) (IC(50)=1.25 uM), while it potentiates rat homomeric ASIC3 (EC(50)=1.53 uM). Rat ASIC1a current inhibition is not complete, and reaches a maximum of 86% inhibition. On rat ASIC3, does not activate the channel itself, but produces a remarkable potentiation of the transient current resulting from the acidic pulse. At the maximal applied concentration, elicits responses that are twice as high as those produced by extracellular protons. Surprisingly, shows a different activity on human ASIC3. On the truncated human ASIC3 (ASIC3-D20), the toxin weakly inhibits the channel. Molecular modeling interaction with rat ASIC1a suggests that it hinders the collapse of acidic pockets and stabilizes nonconducting channels state. In vivo, causes an anxiolytic effect on mouse behavior. Also shows an analgesic activity in an acid-induced muscle pain model, and important anti-inflammatory effect in models of acute local inflammation. This is Pi-stichotoxin-Hmg5c from Heteractis magnifica (Magnificent sea anemone).